The chain runs to 180 residues: Dual-action ribosomal maturation protein DarP (180 aa).

This sequence belongs to the DarP family.

The protein localises to the cytoplasm. Member of a network of 50S ribosomal subunit biogenesis factors which assembles along the 30S-50S interface, preventing incorrect 23S rRNA structures from forming. Promotes peptidyl transferase center (PTC) maturation. The chain is Dual-action ribosomal maturation protein DarP from Chromobacterium violaceum (strain ATCC 12472 / DSM 30191 / JCM 1249 / CCUG 213 / NBRC 12614 / NCIMB 9131 / NCTC 9757 / MK).